Here is a 408-residue protein sequence, read N- to C-terminus: UDP-N-acetylglucosamine--N-acetylmuramyl-(pentapeptide) pyrophosphoryl-undecaprenol N-acetylglucosamine transferase (408 aa).

The segment at 1–20 is disordered; sequence MNDTVKKPTGGRGDDPLPAG. UDP-N-acetyl-alpha-D-glucosamine is bound by residues 41–43, Asn-160, Arg-197, Ser-231, and Gln-327; that span reads TAG.

The protein belongs to the glycosyltransferase 28 family. MurG subfamily.

The protein resides in the cell membrane. The catalysed reaction is di-trans,octa-cis-undecaprenyl diphospho-N-acetyl-alpha-D-muramoyl-L-alanyl-D-glutamyl-meso-2,6-diaminopimeloyl-D-alanyl-D-alanine + UDP-N-acetyl-alpha-D-glucosamine = di-trans,octa-cis-undecaprenyl diphospho-[N-acetyl-alpha-D-glucosaminyl-(1-&gt;4)]-N-acetyl-alpha-D-muramoyl-L-alanyl-D-glutamyl-meso-2,6-diaminopimeloyl-D-alanyl-D-alanine + UDP + H(+). It functions in the pathway cell wall biogenesis; peptidoglycan biosynthesis. Cell wall formation. Catalyzes the transfer of a GlcNAc subunit on undecaprenyl-pyrophosphoryl-MurNAc-pentapeptide (lipid intermediate I) to form undecaprenyl-pyrophosphoryl-MurNAc-(pentapeptide)GlcNAc (lipid intermediate II). This is UDP-N-acetylglucosamine--N-acetylmuramyl-(pentapeptide) pyrophosphoryl-undecaprenol N-acetylglucosamine transferase from Mycolicibacterium paratuberculosis (strain ATCC BAA-968 / K-10) (Mycobacterium paratuberculosis).